We begin with the raw amino-acid sequence, 371 residues long: tRNA-specific 2-thiouridylase MnmA (371 aa).

Residues 9–16 (AMSGGVDS) and M35 contribute to the ATP site. Residue C109 is the Nucleophile of the active site. C109 and C207 are disulfide-bonded. G133 is an ATP binding site. The interaction with tRNA stretch occupies residues 157–159 (KDQ). The active-site Cysteine persulfide intermediate is the C207.

Belongs to the MnmA/TRMU family.

Its subcellular location is the cytoplasm. The catalysed reaction is S-sulfanyl-L-cysteinyl-[protein] + uridine(34) in tRNA + AH2 + ATP = 2-thiouridine(34) in tRNA + L-cysteinyl-[protein] + A + AMP + diphosphate + H(+). Its function is as follows. Catalyzes the 2-thiolation of uridine at the wobble position (U34) of tRNA, leading to the formation of s(2)U34. This is tRNA-specific 2-thiouridylase MnmA from Solibacter usitatus (strain Ellin6076).